Reading from the N-terminus, the 379-residue chain is Transaminase htyB (379 aa).

Arg92 lines the pyridoxal 5'-phosphate pocket. The residue at position 203 (Lys203) is an N6-(pyridoxal phosphate)lysine. Glu239 lines the pyridoxal 5'-phosphate pocket.

It belongs to the class-IV pyridoxal-phosphate-dependent aminotransferase family. The cofactor is pyridoxal 5'-phosphate.

It participates in antifungal biosynthesis. In terms of biological role, transaminase; part of the gene cluster that mediates the de novo generation of L-homotyrosine from acetyl-CoA and 4-hydroxyphenyl-pyruvate. L-homotyrosine is a building block of echinocandin B, a fungal lipidated cyclic hexapeptide that acts as an antifungal agent. L-homotyrosine 4-hydroxyphenyl-pyruvate first undergoes an aldol-type condensation by htyA with the C-2 of acetyl-CoA followed by the release of CoA to form 2-(4-hydroxybenzyl)-malate. This is followed by isomerization of 2-(4-hydroxy-benzyl)-malate to 3-(4-hydroxybenzyl)-malate by htyD. Thereafter, 3-(4-hydroxybenzyl)-malate undergoes decarboxylation and oxidation to form 2-oxo-4-(4-hydroxybenzyl)butanoic acid, coupled to reduction of NAD(+) to NADH by htyC. The product then undergoes transamination catalyzed by htyB to form L-homotyrosine. The chain is Transaminase htyB from Aspergillus rugulosus (Emericella rugulosa).